A 260-amino-acid chain; its full sequence is Snake venom serine protease homolog KN4 (260 aa).

A signal peptide spans 1–18 (MVLIRVLANLLILQLSYA). Positions 19–24 (QKSSEL) are excised as a propeptide. A Peptidase S1 domain is found at 25-251 (IIGGDECNIN…HLDWIQNIIA (227 aa)). Cystine bridges form between Cys31–Cys165, Cys52–Cys68, Cys100–Cys258, Cys144–Cys212, Cys176–Cys191, and Cys202–Cys227. N-linked (GlcNAc...) asparagine glycans are attached at residues Asn83, Asn123, Asn124, Asn156, and Asn172. An N-linked (GlcNAc...) asparagine glycan is attached at Asn253.

This sequence belongs to the peptidase S1 family. Snake venom subfamily. As to expression, expressed by the venom gland.

The protein localises to the secreted. Snake venom serine protease homolog that may act in the hemostasis system of the prey. The protein is Snake venom serine protease homolog KN4 of Trimeresurus stejnegeri (Chinese green tree viper).